The chain runs to 157 residues: uncharacterized protein (157 aa).

An HD domain is found at N33–L134.

This is an uncharacterized protein from Clostridium beijerinckii (strain ATCC 51743 / NCIMB 8052) (Clostridium acetobutylicum).